The following is a 501-amino-acid chain: Cell division control protein 24 (501 aa).

Interacts with dna2, pcn1 and rfc1.

The protein localises to the nucleus. It localises to the cytoplasm. Functionally, has a role in the progression of DNA replication and in the maintenance of genomic integrity. Acts during S phase, after initiation, where it is essential for completion. This Schizosaccharomyces pombe (strain 972 / ATCC 24843) (Fission yeast) protein is Cell division control protein 24 (cdc24).